Consider the following 247-residue polypeptide: Sec-independent protein translocase protein TatC (247 aa).

5 consecutive transmembrane segments (helical) span residues 21–41 (IILL…KPLI), 71–91 (AFII…WAFV), 109–129 (ITFL…FPFI), 154–174 (FLLQ…VIML), and 195–215 (FCLL…HLMI).

Belongs to the TatC family. Forms a complex with TatA.

It localises to the cell membrane. Functionally, part of the twin-arginine translocation (Tat) system that transports large folded proteins containing a characteristic twin-arginine motif in their signal peptide across membranes. The sequence is that of Sec-independent protein translocase protein TatC from Listeria innocua serovar 6a (strain ATCC BAA-680 / CLIP 11262).